A 160-amino-acid polypeptide reads, in one-letter code: Eosinophil cationic protein (160 aa).

The signal sequence occupies residues 1–27 (MVPKLFTSQICLLLLLGLMGVEGSLHA). The required for nearly all of the bactericidal activities; partially involved in LPS-binding stretch occupies residues 28-72 (RPPQFTKAQWFAIQHINVNPPRCTIAMRVINNYQRRCKNQNTFLR). His42 serves as the catalytic Proton acceptor. Disulfide bonds link Cys50–Cys110, Cys64–Cys123, Cys82–Cys138, and Cys89–Cys98. Residue Tyr60 is modified to 3'-nitrotyrosine. 65 to 69 (KNQNT) is a binding site for substrate. Residues Asn92 and Asn119 are each glycosylated (N-linked (GlcNAc...) asparagine). His155 functions as the Proton donor in the catalytic mechanism.

This sequence belongs to the pancreatic ribonuclease family. Interacts with bacterial lipopolysaccharide (LPS) and lipoteichoic acid (LTA). In vitro interacts with phospholipid bilayers.

Its subcellular location is the secreted. Its function is as follows. Cytotoxin and helminthotoxin with low-efficiency ribonuclease activity. Possesses a wide variety of biological activities. Exhibits antibacterial activity. This is Eosinophil cationic protein (RNASE3) from Macaca fascicularis (Crab-eating macaque).